The chain runs to 240 residues: Cysteine-rich venom protein catrin (240 aa).

An N-terminal signal peptide occupies residues 1-19 (MIAFIVLPILAAVLQQSSG). An SCP domain is found at 38–166 (VDLHNFLRRS…KYSYFYVCQY (129 aa)). Cystine bridges form between cysteine 75-cysteine 153, cysteine 92-cysteine 167, cysteine 148-cysteine 164, cysteine 186-cysteine 193, cysteine 189-cysteine 198, cysteine 202-cysteine 235, cysteine 211-cysteine 229, and cysteine 220-cysteine 233. Residues 202–235 (CTKEDKYTNCKSLVQQAGCQDKQMQSDCPAICFC) enclose the ShKT domain.

It belongs to the CRISP family. Expressed by the venom gland.

It is found in the secreted. Catrin-2 weakly blocks contraction of smooth muscle elicited by high potassium-induced depolarization, but does not block caffeine-stimulated contraction. Catrin-1 has no significant effect. May target voltage-gated calcium channels on smooth muscle. The protein is Cysteine-rich venom protein catrin of Crotalus atrox (Western diamondback rattlesnake).